A 497-amino-acid chain; its full sequence is uncharacterized protein (497 aa).

Residues 474-497 (DPRNPFSNGKPSGWSDEDVAWLKR) form a disordered region. A compositionally biased stretch (acidic residues) spans 488-497 (SDEDVAWLKR).

This is an uncharacterized protein from Bacillus anthracis.